Reading from the N-terminus, the 300-residue chain is 7-methylguanosine phosphate-specific 5'-nucleotidase (300 aa).

Catalysis depends on aspartate 41, which acts as the Nucleophile. 2 residues coordinate Mg(2+): aspartate 41 and aspartate 43. Catalysis depends on aspartate 43, which acts as the Proton donor. Position 88 (glutamate 88) interacts with CMP. Glutamate 88 is a binding site for N(7)-methyl-GMP. Substrate-binding positions include 156–157 (SA) and lysine 205. Aspartate 230 is a Mg(2+) binding site. An N6-acetyllysine modification is found at lysine 256.

The protein belongs to the pyrimidine 5'-nucleotidase family. As to quaternary structure, monomer.

It localises to the cytoplasm. The enzyme catalyses N(7)-methyl-GMP + H2O = N(7)-methylguanosine + phosphate. It carries out the reaction CMP + H2O = cytidine + phosphate. The catalysed reaction is a ribonucleoside 5'-phosphate + H2O = a ribonucleoside + phosphate. Its function is as follows. Specifically hydrolyzes 7-methylguanosine monophosphate (m(7)GMP) to 7-methylguanosine and inorganic phosphate. The specific activity for m(7)GMP may protect cells against undesired salvage of m(7)GMP and its incorporation into nucleic acids. Also has weak activity for CMP. UMP and purine nucleotides are poor substrates. In Mus musculus (Mouse), this protein is 7-methylguanosine phosphate-specific 5'-nucleotidase (Nt5c3b).